An 842-amino-acid polypeptide reads, in one-letter code: Probable vinculin (842 aa).

Positions 585–679 (KEARKRLDDV…AAEEEERKRA (95 aa)) form a coiled coil.

It belongs to the vinculin/alpha-catenin family. In terms of assembly, monomer. Associates with F-actin. Interacts with aarA, ctxA, ctxB and rgaA. In terms of tissue distribution, epithelium.

The protein resides in the cytoplasm. The protein localises to the cell cortex. It is found in the cell junction. Involved in cell adhesion. Thought to play an important role in cytokinesis B, probably by providing substrate adhesion and traction forces. Required to organize and polarize the tip epithelium during cytokinesis. Required for the normal distribution of myosin in the tip epithelium. Involved in the localization of ctxA, ctxB, dcsA, exoc6 and rgaA. Thought to form a complex with ctxA, ctxB, and rgaA which regulates myosin accumulation to the apical plasma membrane. The chain is Probable vinculin (ctnnA) from Dictyostelium discoideum (Social amoeba).